The following is a 142-amino-acid chain: Type 3 secretion system pilotin (142 aa).

The first 23 residues, 1 to 23 (MIRHGSNKLKIFILSILLLTLSG), serve as a signal peptide directing secretion. The N-palmitoyl cysteine moiety is linked to residue Cys24. Cys24 is lipidated: S-diacylglycerol cysteine.

It belongs to the MxiM family. As to quaternary structure, monomer. Interacts with the secretin MxiD/SctC.

Its subcellular location is the cell outer membrane. Its function is as follows. Involved in the synthesis of the type III secretion system (T3SS), also called injectisome, which is used to inject bacterial effector proteins into eukaryotic host cells. Pilot protein that is required for the proper localization of the secretin MxiD/SctC in the outer membrane. Also influences both MxiD/SctC multimerization and stability. Required for both Ipa translocation and tissue culture cell invasion. Binds lipids. This Shigella flexneri protein is Type 3 secretion system pilotin.